A 259-amino-acid chain; its full sequence is MINPIAFKLGPLSLHWYAVCILVGLLLAVYLAAKEAPRKKMTSDDIIDFILIAFPLAIIGARIYYVAFEWSYYSQHLSDIFAIWNGGIAIYGGLITGTIVLFVYCYYKVLNPIHFLDIAAPSVMLAQAIGRWGNFFNQEAYGKAVSQLNYLPSFIRQQMFIDGSYRVPTFLYESMWNLIGFVIIMVWRRKPRSLLDGDILSFYLIWYGCGRLVIEGMRTDSLMLLGIRVSQYVSVLLIVIAIVFIFKRHRQKGISYYQE.

A run of 4 helical transmembrane segments spans residues 12-32 (LSLH…VYLA), 46-66 (IIDF…IYYV), 83-103 (IWNG…VLFV), and 109-129 (VLNP…AQAI). R131 contacts a 1,2-diacyl-sn-glycero-3-phospho-(1'-sn-glycerol). 3 helical membrane-spanning segments follow: residues 167–187 (VPTF…IMVW), 194–214 (LLDG…RLVI), and 226–246 (GIRV…VFIF).

This sequence belongs to the Lgt family.

It is found in the cell membrane. The enzyme catalyses L-cysteinyl-[prolipoprotein] + a 1,2-diacyl-sn-glycero-3-phospho-(1'-sn-glycerol) = an S-1,2-diacyl-sn-glyceryl-L-cysteinyl-[prolipoprotein] + sn-glycerol 1-phosphate + H(+). It participates in protein modification; lipoprotein biosynthesis (diacylglyceryl transfer). Functionally, catalyzes the transfer of the diacylglyceryl group from phosphatidylglycerol to the sulfhydryl group of the N-terminal cysteine of a prolipoprotein, the first step in the formation of mature lipoproteins. This chain is Phosphatidylglycerol--prolipoprotein diacylglyceryl transferase, found in Streptococcus equi subsp. zooepidemicus (strain MGCS10565).